The primary structure comprises 205 residues: Imidazoleglycerol-phosphate dehydratase (205 aa).

This sequence belongs to the imidazoleglycerol-phosphate dehydratase family.

It localises to the cytoplasm. It carries out the reaction D-erythro-1-(imidazol-4-yl)glycerol 3-phosphate = 3-(imidazol-4-yl)-2-oxopropyl phosphate + H2O. The protein operates within amino-acid biosynthesis; L-histidine biosynthesis; L-histidine from 5-phospho-alpha-D-ribose 1-diphosphate: step 6/9. The polypeptide is Imidazoleglycerol-phosphate dehydratase (Chloroflexus aurantiacus (strain ATCC 29366 / DSM 635 / J-10-fl)).